Consider the following 208-residue polypeptide: ATP-dependent Clp protease proteolytic subunit (208 aa).

S107 (nucleophile) is an active-site residue. H132 is an active-site residue.

It belongs to the peptidase S14 family. As to quaternary structure, fourteen ClpP subunits assemble into 2 heptameric rings which stack back to back to give a disk-like structure with a central cavity, resembling the structure of eukaryotic proteasomes.

The protein localises to the cytoplasm. The catalysed reaction is Hydrolysis of proteins to small peptides in the presence of ATP and magnesium. alpha-casein is the usual test substrate. In the absence of ATP, only oligopeptides shorter than five residues are hydrolyzed (such as succinyl-Leu-Tyr-|-NHMec, and Leu-Tyr-Leu-|-Tyr-Trp, in which cleavage of the -Tyr-|-Leu- and -Tyr-|-Trp bonds also occurs).. Its function is as follows. Cleaves peptides in various proteins in a process that requires ATP hydrolysis. Has a chymotrypsin-like activity. Plays a major role in the degradation of misfolded proteins. The sequence is that of ATP-dependent Clp protease proteolytic subunit from Methylorubrum extorquens (strain CM4 / NCIMB 13688) (Methylobacterium extorquens).